Reading from the N-terminus, the 409-residue chain is Tyrosine--tRNA ligase (409 aa).

The 'HIGH' region signature appears at 43 to 52 (PTAPDLHLGH). The short motif at 227-231 (KMSKS) is the 'KMSKS' region element. Lys-230 contacts ATP. Positions 338–399 (LALPQLLKLA…GKRKFAKVTL (62 aa)) constitute an S4 RNA-binding domain.

The protein belongs to the class-I aminoacyl-tRNA synthetase family. TyrS type 2 subfamily. As to quaternary structure, homodimer.

It localises to the cytoplasm. The catalysed reaction is tRNA(Tyr) + L-tyrosine + ATP = L-tyrosyl-tRNA(Tyr) + AMP + diphosphate + H(+). Its function is as follows. Catalyzes the attachment of tyrosine to tRNA(Tyr) in a two-step reaction: tyrosine is first activated by ATP to form Tyr-AMP and then transferred to the acceptor end of tRNA(Tyr). In Nitrosomonas europaea (strain ATCC 19718 / CIP 103999 / KCTC 2705 / NBRC 14298), this protein is Tyrosine--tRNA ligase.